Here is a 949-residue protein sequence, read N- to C-terminus: Coiled-coil domain-containing protein 80 (949 aa).

A signal peptide spans 1–27 (MTWKMGPHFTMLLAMWLVCGSASQSSA). Disordered stretches follow at residues 24-79 (QSSA…RRKS), 289-360 (HVVQ…ATRA), and 408-609 (GPSV…SPRK). The span at 295–305 (NNGGGGGGSTG) shows a compositional bias: gly residues. Residues 308–328 (SDKRKEDPRRTQIHPTREPPR) show a composition bias toward basic and acidic residues. The span at 345–360 (RATTLPPAPVTTATRA) shows a compositional bias: low complexity. Over residues 419–429 (PRKEQQREKPQ) the composition is skewed to basic and acidic residues. Residues 436-453 (KATNYGSFTATPPTTLWE) are compositionally biased toward polar residues. Residues 463-477 (RFRDNRTDKREHGHQ) are compositionally biased toward basic and acidic residues. An N-linked (GlcNAc...) asparagine glycan is attached at asparagine 467. A compositionally biased stretch (basic residues) spans 487–498 (KPIKGKLPKKKE). Composition is skewed to basic and acidic residues over residues 499-511 (KILS…KYDL), 534-548 (KESK…PEKE), and 556-581 (AKPD…EKEK). Glycyl lysine isopeptide (Lys-Gly) (interchain with G-Cter in SUMO2) cross-links involve residues lysine 544 and lysine 547. A coiled-coil region spans residues 559–587 (DKLLRSEKQMKKAEKKSKQEKEKTKKKKA).

It belongs to the CCDC80 family. Binds to various extracellular matrix proteins. Post-translationally, phosphorylated. As to expression, isoform 2 is expressed in uterus, liver, lung, spleen, kidney, heart, bladder, skeletal muscle and brain (at protein level). Isoform 2 is expressed very low in mammary gland and intestine (at protein level). Isoform 2 is expressed in lactating mammary glands and mammary tumors (at protein level). Ubiquitous (isoform 1). Isoform 2 is expressed in ovary, uterus, mammary glands, liver, lung, spleen, kidney, heart, bladder, intestine, skeletal muscle and brain.

It is found in the secreted. The protein resides in the extracellular space. Its subcellular location is the extracellular matrix. Promotes cell adhesion and matrix assembly. The polypeptide is Coiled-coil domain-containing protein 80 (Ccdc80) (Rattus norvegicus (Rat)).